The sequence spans 139 residues: Transcription antitermination protein NusB (139 aa).

It belongs to the NusB family.

Functionally, involved in transcription antitermination. Required for transcription of ribosomal RNA (rRNA) genes. Binds specifically to the boxA antiterminator sequence of the ribosomal RNA (rrn) operons. This Natranaerobius thermophilus (strain ATCC BAA-1301 / DSM 18059 / JW/NM-WN-LF) protein is Transcription antitermination protein NusB.